The primary structure comprises 249 residues: 1-(5-phosphoribosyl)-5-[(5-phosphoribosylamino)methylideneamino] imidazole-4-carboxamide isomerase (249 aa).

The active-site Proton acceptor is aspartate 11. Aspartate 132 acts as the Proton donor in catalysis.

This sequence belongs to the HisA/HisF family.

The protein resides in the cytoplasm. The catalysed reaction is 1-(5-phospho-beta-D-ribosyl)-5-[(5-phospho-beta-D-ribosylamino)methylideneamino]imidazole-4-carboxamide = 5-[(5-phospho-1-deoxy-D-ribulos-1-ylimino)methylamino]-1-(5-phospho-beta-D-ribosyl)imidazole-4-carboxamide. It participates in amino-acid biosynthesis; L-histidine biosynthesis; L-histidine from 5-phospho-alpha-D-ribose 1-diphosphate: step 4/9. The chain is 1-(5-phosphoribosyl)-5-[(5-phosphoribosylamino)methylideneamino] imidazole-4-carboxamide isomerase from Nitrobacter winogradskyi (strain ATCC 25391 / DSM 10237 / CIP 104748 / NCIMB 11846 / Nb-255).